The sequence spans 58 residues: Metallothionein-1 (58 aa).

A beta region spans residues 1–28; that stretch reads PGPCCNDKCVCKEGGCKEGCQCTSCRCS. A divalent metal cation-binding residues include cysteine 4, cysteine 5, cysteine 9, cysteine 11, cysteine 16, cysteine 20, cysteine 22, cysteine 25, cysteine 27, cysteine 30, cysteine 33, cysteine 37, cysteine 39, cysteine 45, cysteine 49, cysteine 53, cysteine 55, and cysteine 56. The alpha stretch occupies residues 29–58; it reads PCEKCSSGCKCANKEECSKTCSKACSCCPT.

The protein belongs to the metallothionein superfamily. Type 3 family.

Its function is as follows. Metallothioneins have a high content of cysteine residues that bind various heavy metals. Class I MTS in marine crustacea are involved in the sequestration of elevated levels of heavy-metal ions. In Scylla serrata (Mud crab), this protein is Metallothionein-1.